The following is a 282-amino-acid chain: Protease HtpX homolog (282 aa).

Helical transmembrane passes span 7–26 (TTVL…GAVG) and 30–49 (GMMI…YWFS). His131 is a Zn(2+) binding site. Glu132 is an active-site residue. Residue His135 participates in Zn(2+) binding. Helical transmembrane passes span 141-161 (ILVS…ARMA) and 183-203 (LGLV…QLAI). Residue Glu208 coordinates Zn(2+).

The protein belongs to the peptidase M48B family. Zn(2+) serves as cofactor.

The protein resides in the cell inner membrane. The chain is Protease HtpX homolog from Syntrophobacter fumaroxidans (strain DSM 10017 / MPOB).